A 361-amino-acid chain; its full sequence is Probable mannose-1-phosphate guanylyltransferase 1 (361 aa).

Residues leucine 6 and valine 7 each contribute to the GDP-alpha-D-mannose site. Diphosphate contacts are provided by glycine 9, glycine 11, threonine 12, arginine 13, and lysine 23. 5 residues coordinate GDP-alpha-D-mannose: glycine 85, asparagine 109, aspartate 111, glycine 146, and asparagine 173.

It belongs to the transferase hexapeptide repeat family.

The enzyme catalyses alpha-D-mannose 1-phosphate + GTP + H(+) = GDP-alpha-D-mannose + diphosphate. Its pathway is nucleotide-sugar biosynthesis; GDP-alpha-D-mannose biosynthesis; GDP-alpha-D-mannose from alpha-D-mannose 1-phosphate (GTP route): step 1/1. Catalyzes a reaction of the Smirnoff-Wheeler pathway, the major route to ascorbate biosynthesis in plants. The sequence is that of Probable mannose-1-phosphate guanylyltransferase 1 from Oryza sativa subsp. japonica (Rice).